Here is a 276-residue protein sequence, read N- to C-terminus: MKLCGFEVGLDQPLFLIAGPCVIESMQLQLDVAGKLKEITGKLGVNFIFKSSFDKANRTSGTSFRGPGLEEGLKVLDAVKRQIGVPVLTDVHEYTPMNEVAAVVDVLQTPAFLVRQTDFIKNVCAAGKPVNIKKGQFLAPWDMKPVVDKAKSTGNAQIMVCERGASFGYNNLVSDMRSLSVMRDTGCPVVFDATHSVQLPGGQGSSSGGQREFVPVLARAAVAVGISGLFAETHPDPSKALSDGPNAWPLDRMEELLETLMELDAVTKKHGFARFA.

This sequence belongs to the KdsA family.

The protein localises to the cytoplasm. It catalyses the reaction D-arabinose 5-phosphate + phosphoenolpyruvate + H2O = 3-deoxy-alpha-D-manno-2-octulosonate-8-phosphate + phosphate. The protein operates within carbohydrate biosynthesis; 3-deoxy-D-manno-octulosonate biosynthesis; 3-deoxy-D-manno-octulosonate from D-ribulose 5-phosphate: step 2/3. It functions in the pathway bacterial outer membrane biogenesis; lipopolysaccharide biosynthesis. In Xanthomonas oryzae pv. oryzae (strain MAFF 311018), this protein is 2-dehydro-3-deoxyphosphooctonate aldolase.